We begin with the raw amino-acid sequence, 359 residues long: 1-deoxy-D-xylulose 5-phosphate reductoisomerase (359 aa).

NADPH is bound by residues Thr-12, Gly-13, Ser-14, Ile-15, Lys-38, and Asn-39. A 1-deoxy-D-xylulose 5-phosphate-binding site is contributed by Lys-105. Glu-106 contributes to the NADPH binding site. Asp-130 is a binding site for Mn(2+). Residues Ser-131, Glu-132, Ser-152, and His-175 each contribute to the 1-deoxy-D-xylulose 5-phosphate site. Glu-132 lines the Mn(2+) pocket. Residue Gly-181 participates in NADPH binding. 1-deoxy-D-xylulose 5-phosphate is bound by residues Ser-188, Asn-193, Lys-194, and Glu-197. Glu-197 contacts Mn(2+).

The protein belongs to the DXR family. Requires Mg(2+) as cofactor. Mn(2+) is required as a cofactor.

It carries out the reaction 2-C-methyl-D-erythritol 4-phosphate + NADP(+) = 1-deoxy-D-xylulose 5-phosphate + NADPH + H(+). It functions in the pathway isoprenoid biosynthesis; isopentenyl diphosphate biosynthesis via DXP pathway; isopentenyl diphosphate from 1-deoxy-D-xylulose 5-phosphate: step 1/6. Catalyzes the NADPH-dependent rearrangement and reduction of 1-deoxy-D-xylulose-5-phosphate (DXP) to 2-C-methyl-D-erythritol 4-phosphate (MEP). This chain is 1-deoxy-D-xylulose 5-phosphate reductoisomerase, found in Pseudothermotoga lettingae (strain ATCC BAA-301 / DSM 14385 / NBRC 107922 / TMO) (Thermotoga lettingae).